We begin with the raw amino-acid sequence, 494 residues long: Guanosine-5'-triphosphate,3'-diphosphate pyrophosphatase (494 aa).

The protein belongs to the GppA/Ppx family. GppA subfamily.

It carries out the reaction guanosine 3'-diphosphate 5'-triphosphate + H2O = guanosine 3',5'-bis(diphosphate) + phosphate + H(+). Its pathway is purine metabolism; ppGpp biosynthesis; ppGpp from GTP: step 2/2. Functionally, catalyzes the conversion of pppGpp to ppGpp. Guanosine pentaphosphate (pppGpp) is a cytoplasmic signaling molecule which together with ppGpp controls the 'stringent response', an adaptive process that allows bacteria to respond to amino acid starvation, resulting in the coordinated regulation of numerous cellular activities. The chain is Guanosine-5'-triphosphate,3'-diphosphate pyrophosphatase from Escherichia coli O139:H28 (strain E24377A / ETEC).